The following is a 410-amino-acid chain: Angiopoietin-related protein 4 (410 aa).

The first 23 residues, M1–A23, serve as a signal peptide directing secretion. A disordered region spans residues K81–P106. Residues E107–A155 adopt a coiled-coil conformation. N-linked (GlcNAc...) asparagine glycosylation is present at N184. The Fibrinogen C-terminal domain maps to S186–A408. Intrachain disulfides connect C195–C223 and C348–C361.

In terms of assembly, homooligomer; disulfide-linked via Cys residues in the N-terminal part of the protein. The homooligomer undergoes proteolytic processing to release the ANGPTL4 C-terminal chain, which circulates as a monomer. The homooligomer unprocessed form is able to interact with the extracellular matrix. Post-translationally, N-glycosylated. In terms of processing, forms disulfide-linked dimers and tetramers. Cleaved into a smaller N-terminal chain and a larger chain that contains the fibrinogen C-terminal domain; both cleaved and uncleaved forms are detected in the extracellular space. The cleaved form is not present within the cell.

The protein localises to the secreted. It is found in the extracellular space. Its subcellular location is the extracellular matrix. In terms of biological role, mediates inactivation of the lipoprotein lipase LPL, and thereby plays a role in the regulation of triglyceride clearance from the blood serum and in lipid metabolism. May also play a role in regulating glucose homeostasis and insulin sensitivity. Inhibits proliferation, migration, and tubule formation of endothelial cells and reduces vascular leakage. Upon heterologous expression, inhibits the adhesion of endothelial cell to the extracellular matrix (ECM), and inhibits the reorganization of the actin cytoskeleton, formation of actin stress fibers and focal adhesions in endothelial cells that have adhered to ANGPTL4-containing ECM (in vitro). Depending on context, may modulate tumor-related angiogenesis. Its function is as follows. Mediates inactivation of the lipoprotein lipase LPL, and thereby plays an important role in the regulation of triglyceride clearance from the blood serum and in lipid metabolism. Has higher activity in LPL inactivation than the uncleaved protein. The chain is Angiopoietin-related protein 4 (ANGPTL4) from Bos taurus (Bovine).